The sequence spans 1072 residues: MSKKRVHEIAKELKSHGIELDNKEVVTELSSLGYDVKSHSSSLDDDQATAAVQKILDKRKPKQATPPVTAKGFVVRRKVGPPAGATADSGAEASQAAEPAYEPPSAPEPATFAAEEPVQAPPPVEAPRAPVEAPSAPEPQRVEAPVAAATEPTAPAAVTSTPPAQVAEATKAPAAAEVASPPPAAEAPQAPVEAPRAAVPAPAAAQPRPSVQESTTLPQPPPRSPVPPAVRTPSSTSSSATVVSRGPAPGYQQRGGPGGGRPGGPGGPGGRPGGPGGPGGRPGGPGGPGGRPGGPGGPGGRPGGPGGRPSYQGPGSYQGAGRPGQGPVRPTSAPGTGVQASASASPIPQGPTIMVGGVPHAQVSPTGTARPTATQAVVISRPLIQVRRVTPTAGQAKQYPMAPGRTGIPERREYKVVPDHLGRGRELVDVSKNKERGQRKRTSGDTQSVSKQELTDMVWGRVTIPIRGKKRKPTKKGAKTQITQMAEEKKVIKLQEGISVSDLGQRMGVRSAELIKKLMGLGKMATANQLVDADTAEMIAGDYGWKIDRVGFEVEDYLPEVETRPEDERPRPPVVAIMGHVDHGKTSLLDAIRKASVAQGEAGGITQHIGAYSITTARGDVTFLDTPGHEAFTSMRARGADVTDIVVLVVASDDGVMPQTVEAIKHAKAAEVPIVVAINKMDLPTANLDRVKKDLATHELVPEEWGGDTIMVPVSAKTKENLELLLENLALQAEVLELASNPLRPSVGAIIEAKLDRGRGPVATVLVQEGTLKLGDAVVTGSHYGRVRAMTNSRGEQVKEVKPGYCAEVVGLSGVPGAGDAINVVADEKAAKQIAEHRNMKERQTELSKVSRESLEQLFAKTKAGGGPKELRVVIKADVQGSAEAVKQAVQKLSTHKVKVEVVHSGVGAITEGDVMRAAASKGVVLGFNVNPESGAEAAAKAQEVVLKSYSIIYELIDGVRTEMEGLLEPIRTERKLGRAEVRNTFNVPRLGTIAGAAVLDGVMKRGAIVRLMRENKQLFSGKMASLRRFKDDVKEVAQGFECGIGIESFNDLKPGDIIEAYEIVETRQSLT.

2 disordered regions span residues 55–369 and 426–452; these read ILDK…TGTA and ELVD…VSKQ. Composition is skewed to low complexity over residues 91-100, 108-118, 126-179, and 186-212; these read AEASQAAEPA, EPATFAAEEPV, APRA…AEVA, and EAPQ…PSVQ. Residues 218–230 show a composition bias toward pro residues; it reads PQPPPRSPVPPAV. Positions 231–245 are enriched in low complexity; that stretch reads RTPSSTSSSATVVSR. A compositionally biased stretch (gly residues) spans 253 to 307; it reads QRGGPGGGRPGGPGGPGGRPGGPGGPGGRPGGPGGPGGRPGGPGGPGGRPGGPGG. The span at 426–436 shows a compositional bias: basic and acidic residues; the sequence is ELVDVSKNKER. The tr-type G domain maps to 570-737; sequence PRPPVVAIMG…NLALQAEVLE (168 aa). Residues 579–586 are G1; sequence GHVDHGKT. 579 to 586 serves as a coordination point for GTP; that stretch reads GHVDHGKT. The tract at residues 604-608 is G2; the sequence is GITQH. The tract at residues 625 to 628 is G3; that stretch reads DTPG. GTP is bound by residues 625–629 and 679–682; these read DTPGH and NKMD. Residues 679 to 682 are G4; it reads NKMD. The segment at 715–717 is G5; the sequence is SAK.

This sequence belongs to the TRAFAC class translation factor GTPase superfamily. Classic translation factor GTPase family. IF-2 subfamily.

Its subcellular location is the cytoplasm. Functionally, one of the essential components for the initiation of protein synthesis. Protects formylmethionyl-tRNA from spontaneous hydrolysis and promotes its binding to the 30S ribosomal subunits. Also involved in the hydrolysis of GTP during the formation of the 70S ribosomal complex. This chain is Translation initiation factor IF-2, found in Myxococcus xanthus (strain DK1622).